A 374-amino-acid polypeptide reads, in one-letter code: Arrestin domain-containing protein 15 (374 aa).

Residues 344-374 are disordered; sequence HHLNRSKAKVSKTEQQQRKTRNIVEENPYFR.

The protein belongs to the arrestin family.

This chain is Arrestin domain-containing protein 15 (arrd-15), found in Caenorhabditis elegans.